Here is a 443-residue protein sequence, read N- to C-terminus: Flagellum-specific ATP synthase (443 aa).

169-176 (AGAGVGKS) is a binding site for ATP.

Belongs to the ATPase alpha/beta chains family.

The protein localises to the cytoplasm. It carries out the reaction ATP + H2O + 4 H(+)(in) = ADP + phosphate + 5 H(+)(out). Its function is as follows. Probable catalytic subunit of a protein translocase for flagellum-specific export, or a proton translocase involved in local circuits at the flagellum. In Aquifex aeolicus (strain VF5), this protein is Flagellum-specific ATP synthase (fliI).